Reading from the N-terminus, the 349-residue chain is Phenylalanine--tRNA ligase alpha subunit (349 aa).

Residue E259 coordinates Mg(2+).

The protein belongs to the class-II aminoacyl-tRNA synthetase family. Phe-tRNA synthetase alpha subunit type 1 subfamily. In terms of assembly, tetramer of two alpha and two beta subunits. Mg(2+) is required as a cofactor.

It is found in the cytoplasm. It carries out the reaction tRNA(Phe) + L-phenylalanine + ATP = L-phenylalanyl-tRNA(Phe) + AMP + diphosphate + H(+). The protein is Phenylalanine--tRNA ligase alpha subunit of Lactobacillus johnsonii (strain CNCM I-12250 / La1 / NCC 533).